The primary structure comprises 231 residues: RING finger protein 141 (231 aa).

Gly-2 carries the N-myristoyl glycine lipid modification. The segment at 156-193 (CCICMDGRADLILPCAHSFCQKCIDKWSDRHRNCPICR) adopts an RING-type zinc-finger fold.

Its subcellular location is the membrane. Its function is as follows. May be involved in spermatogenesis. The chain is RING finger protein 141 (RNF141) from Canis lupus familiaris (Dog).